A 214-amino-acid chain; its full sequence is Adenylate kinase (214 aa).

Residue 10–15 (GAGKGT) participates in ATP binding. Residues 30–59 (STGDMLRAAVKAGTPLGLEAKKVMDAGQLV) are NMP. Residues T31, R36, 57-59 (QLV), 85-88 (GFPR), and Q92 contribute to the AMP site. Residues 122-159 (GRRVHSGSGRVYHVVFNPPKVEGKDDVTGEDLSIRPDD) form an LID region. ATP contacts are provided by residues R123 and 132–133 (VY). 2 residues coordinate AMP: R156 and R167. ATP is bound at residue Q200.

Belongs to the adenylate kinase family. In terms of assembly, monomer.

The protein localises to the cytoplasm. The catalysed reaction is AMP + ATP = 2 ADP. The protein operates within purine metabolism; AMP biosynthesis via salvage pathway; AMP from ADP: step 1/1. Functionally, catalyzes the reversible transfer of the terminal phosphate group between ATP and AMP. Plays an important role in cellular energy homeostasis and in adenine nucleotide metabolism. The sequence is that of Adenylate kinase from Shewanella frigidimarina (strain NCIMB 400).